The sequence spans 126 residues: MHLSLLKAKIHRATVTHSELNYEGSIAIDGLLLEATGIREFEQVHIWDVTNGARFSTYAIRAEQGSGIISLNGGAARHVQVGDLIIVAAFASMSEDQAKTFKPNLVYVDAHNAISHTNHSIPTQAA.

Ser-25 (schiff-base intermediate with substrate; via pyruvic acid) is an active-site residue. Ser-25 bears the Pyruvic acid (Ser) mark. Thr-57 is a substrate binding site. Tyr-58 (proton donor) is an active-site residue. Residue 73 to 75 (GGA) participates in substrate binding.

Belongs to the PanD family. As to quaternary structure, heterooctamer of four alpha and four beta subunits. Requires pyruvate as cofactor. Post-translationally, is synthesized initially as an inactive proenzyme, which is activated by self-cleavage at a specific serine bond to produce a beta-subunit with a hydroxyl group at its C-terminus and an alpha-subunit with a pyruvoyl group at its N-terminus.

It localises to the cytoplasm. It catalyses the reaction L-aspartate + H(+) = beta-alanine + CO2. Its pathway is cofactor biosynthesis; (R)-pantothenate biosynthesis; beta-alanine from L-aspartate: step 1/1. Functionally, catalyzes the pyruvoyl-dependent decarboxylation of aspartate to produce beta-alanine. In Xanthomonas campestris pv. campestris (strain ATCC 33913 / DSM 3586 / NCPPB 528 / LMG 568 / P 25), this protein is Aspartate 1-decarboxylase.